Consider the following 354-residue polypeptide: 3'-hydroxy-N-methyl-(S)-coclaurine 4'-O-methyltransferase 1 (354 aa).

Asp-223 lines the S-adenosyl-L-methionine pocket. The active-site Proton acceptor is His-261.

This sequence belongs to the class I-like SAM-binding methyltransferase superfamily. Cation-independent O-methyltransferase family. COMT subfamily. Expressed in roots, stems, leaves and flowers. Restricted to sieve elements of the phloem adjacent or proximal to laticifers.

The enzyme catalyses (S)-3'-hydroxy-N-methylcoclaurine + S-adenosyl-L-methionine = (S)-reticuline + S-adenosyl-L-homocysteine + H(+). Its pathway is alkaloid biosynthesis; (S)-reticuline biosynthesis; (S)-reticuline from (S)-norcoclaurine: step 4/4. Involved in the biosynthesis of benzylisoquinoline alkaloids. Catalyzes the transfer of the methyl group to the 4'-hydroxyl group of 3'-hydroxy-N-methylcoclaurine to form reticuline. Also involved in the papaverine biosynthesis. The protein is 3'-hydroxy-N-methyl-(S)-coclaurine 4'-O-methyltransferase 1 of Papaver somniferum (Opium poppy).